A 113-amino-acid polypeptide reads, in one-letter code: Large ribosomal subunit protein bL17 (113 aa).

It belongs to the bacterial ribosomal protein bL17 family. In terms of assembly, part of the 50S ribosomal subunit. Contacts protein L32.

This Clostridium botulinum (strain Loch Maree / Type A3) protein is Large ribosomal subunit protein bL17.